The sequence spans 279 residues: ATP synthase gamma chain (279 aa).

The protein belongs to the ATPase gamma chain family. F-type ATPases have 2 components, CF(1) - the catalytic core - and CF(0) - the membrane proton channel. CF(1) has five subunits: alpha(3), beta(3), gamma(1), delta(1), epsilon(1). CF(0) has three main subunits: a, b and c.

The protein resides in the cell membrane. Functionally, produces ATP from ADP in the presence of a proton gradient across the membrane. The gamma chain is believed to be important in regulating ATPase activity and the flow of protons through the CF(0) complex. The polypeptide is ATP synthase gamma chain (Mycoplasma pneumoniae (strain ATCC 29342 / M129 / Subtype 1) (Mycoplasmoides pneumoniae)).